Consider the following 904-residue polypeptide: Protein translocase subunit SecA (904 aa).

ATP-binding positions include Gln-87, 105-109 (GEGKT), and Asp-507. Residues 865–887 (GEGAEAAGQQPADAGPKIGRNDP) are disordered. Over residues 868–880 (AEAAGQQPADAGP) the composition is skewed to low complexity. Residues Cys-888, Cys-890, Cys-899, and His-900 each coordinate Zn(2+).

The protein belongs to the SecA family. Monomer and homodimer. Part of the essential Sec protein translocation apparatus which comprises SecA, SecYEG and auxiliary proteins SecDF-YajC and YidC. Zn(2+) serves as cofactor.

The protein localises to the cell inner membrane. It is found in the cytoplasm. It carries out the reaction ATP + H2O + cellular proteinSide 1 = ADP + phosphate + cellular proteinSide 2.. In terms of biological role, part of the Sec protein translocase complex. Interacts with the SecYEG preprotein conducting channel. Has a central role in coupling the hydrolysis of ATP to the transfer of proteins into and across the cell membrane, serving both as a receptor for the preprotein-SecB complex and as an ATP-driven molecular motor driving the stepwise translocation of polypeptide chains across the membrane. This Dechloromonas aromatica (strain RCB) protein is Protein translocase subunit SecA.